A 180-amino-acid chain; its full sequence is Cancer/testis antigen 1 (180 aa).

Gly residues-rich tracts occupy residues 1-47 and 55-66; these read MQAE…GPRG and GPGGGAPRGPHG. Residues 1 to 66 are disordered; it reads MQAEGRGTGG…GGGAPRGPHG (66 aa).

It belongs to the CTAG/PCC1 family. In terms of tissue distribution, expressed in testis and ovary and in a wide variety of cancers. Detected in uterine myometrium. Expressed from 18 weeks until birth in human fetal testis. In the adult testis, is strongly expressed in spermatogonia and in primary spermatocytes, but not in post-meiotic cells or in testicular somatic cells (at protein level).

It is found in the cytoplasm. The chain is Cancer/testis antigen 1 (CTAG1A) from Homo sapiens (Human).